The chain runs to 258 residues: Snake venom serine protease (258 aa).

A signal peptide spans 1–18 (MVLIRVLANLLILQLSYA). Positions 19-24 (QKSSEL) are excised as a propeptide. One can recognise a Peptidase S1 domain in the interval 25–249 (VIGGDECNIN…YTEWIQSILA (225 aa)). 6 cysteine pairs are disulfide-bonded: Cys31/Cys163, Cys50/Cys66, Cys98/Cys256, Cys142/Cys210, Cys174/Cys189, and Cys200/Cys225. Residues His65 and Asp110 each act as charge relay system in the active site. Residue Asn154 is glycosylated (N-linked (GlcNAc...) asparagine). Ser204 functions as the Charge relay system in the catalytic mechanism.

It belongs to the peptidase S1 family. Snake venom subfamily. As to quaternary structure, monomer. As to expression, expressed by the venom gland.

The protein resides in the secreted. Functionally, snake venom serine protease that may act in the hemostasis system of the prey. In Lachesis stenophrys (Central American bushmaster), this protein is Snake venom serine protease.